The following is a 941-amino-acid chain: UvrABC system protein A (941 aa).

Gly-37–Ser-44 contributes to the ATP binding site. A C4-type zinc finger spans residues Cys-260 to Cys-287. 2 consecutive ABC transporter domains span residues Ile-316–Ser-585 and Lys-605–Ala-937. Gly-637 to Ser-644 lines the ATP pocket. The C4-type zinc finger occupies Cys-737 to Cys-763.

This sequence belongs to the ABC transporter superfamily. UvrA family. As to quaternary structure, forms a heterotetramer with UvrB during the search for lesions.

The protein resides in the cytoplasm. In terms of biological role, the UvrABC repair system catalyzes the recognition and processing of DNA lesions. UvrA is an ATPase and a DNA-binding protein. A damage recognition complex composed of 2 UvrA and 2 UvrB subunits scans DNA for abnormalities. When the presence of a lesion has been verified by UvrB, the UvrA molecules dissociate. This is UvrABC system protein A from Helicobacter pylori (strain J99 / ATCC 700824) (Campylobacter pylori J99).